A 740-amino-acid polypeptide reads, in one-letter code: Eukaryotic translation initiation factor 3 subunit B (740 aa).

A compositionally biased stretch (polar residues) spans M1 to E10. The interval M1 to D22 is disordered. A compositionally biased stretch (acidic residues) spans L13 to D22. The region spanning T40–D126 is the RRM domain. WD repeat units follow at residues A193–Q230, P232–V289, E302–K343, I513–E556, and V571–A609. The interval D695–E721 is disordered.

This sequence belongs to the eIF-3 subunit B family. In terms of assembly, component of the eukaryotic translation initiation factor 3 (eIF-3) complex.

It is found in the cytoplasm. Its function is as follows. RNA-binding component of the eukaryotic translation initiation factor 3 (eIF-3) complex, which is involved in protein synthesis of a specialized repertoire of mRNAs and, together with other initiation factors, stimulates binding of mRNA and methionyl-tRNAi to the 40S ribosome. The eIF-3 complex specifically targets and initiates translation of a subset of mRNAs involved in cell proliferation. This is Eukaryotic translation initiation factor 3 subunit B (prt1) from Aspergillus niger (strain ATCC MYA-4892 / CBS 513.88 / FGSC A1513).